A 298-amino-acid chain; its full sequence is Small ribosomal subunit protein uS2 (298 aa).

A disordered region spans residues 240 to 298 (AGENWDTQAPGAGVPGSAFAAASAAAATSWEADGGDWAASSAPPAGESWAETQPTEAKW). The segment covering 248–271 (APGAGVPGSAFAAASAAAATSWEA) has biased composition (low complexity). The segment covering 289–298 (AETQPTEAKW) has biased composition (polar residues).

This sequence belongs to the universal ribosomal protein uS2 family. In terms of assembly, component of the small ribosomal subunit. Mature ribosomes consist of a small (40S) and a large (60S) subunit. The 40S subunit contains about 33 different proteins and 1 molecule of RNA (18S). The 60S subunit contains about 49 different proteins and 3 molecules of RNA (25S, 5.8S and 5S). Interacts with rps21.

The protein localises to the cytoplasm. Functionally, required for the assembly and/or stability of the 40S ribosomal subunit. Required for the processing of the 20S rRNA-precursor to mature 18S rRNA in a late step of the maturation of 40S ribosomal subunits. The polypeptide is Small ribosomal subunit protein uS2 (rps0) (Aspergillus clavatus (strain ATCC 1007 / CBS 513.65 / DSM 816 / NCTC 3887 / NRRL 1 / QM 1276 / 107)).